The sequence spans 373 residues: Chaperone protein DnaJ (373 aa).

In terms of domain architecture, J spans 5-70 (DYYEVLGVAK…QKRAAYDRYG (66 aa)). The CR-type zinc-finger motif lies at 133–211 (GFDTEIRVPS…CDGVGRTRRN (79 aa)). Zn(2+)-binding residues include Cys-146, Cys-149, Cys-163, Cys-166, Cys-185, Cys-188, Cys-199, and Cys-202. CXXCXGXG motif repeat units follow at residues 146–153 (CDTCHGSG), 163–170 (CRTCGGSG), 185–192 (CPTCHGTG), and 199–206 (CPSCDGVG).

It belongs to the DnaJ family. Homodimer. Zn(2+) serves as cofactor.

It is found in the cytoplasm. In terms of biological role, participates actively in the response to hyperosmotic and heat shock by preventing the aggregation of stress-denatured proteins and by disaggregating proteins, also in an autonomous, DnaK-independent fashion. Unfolded proteins bind initially to DnaJ; upon interaction with the DnaJ-bound protein, DnaK hydrolyzes its bound ATP, resulting in the formation of a stable complex. GrpE releases ADP from DnaK; ATP binding to DnaK triggers the release of the substrate protein, thus completing the reaction cycle. Several rounds of ATP-dependent interactions between DnaJ, DnaK and GrpE are required for fully efficient folding. Also involved, together with DnaK and GrpE, in the DNA replication of plasmids through activation of initiation proteins. This chain is Chaperone protein DnaJ, found in Bordetella bronchiseptica (strain ATCC BAA-588 / NCTC 13252 / RB50) (Alcaligenes bronchisepticus).